Consider the following 363-residue polypeptide: Probable auxin efflux carrier component 5a (363 aa).

10 helical membrane-spanning segments follow: residues 7–27 (VYKV…GYGS), 39–59 (CDAV…FEFT), 72–92 (VAAD…WARF), 103–123 (SITS…VPMA), 134–154 (LVVQ…LFVL), 222–242 (FVGI…PSAF), 246–266 (VLIM…LFMA), 281–301 (LGLV…SIAV), 307–327 (VLRV…FIFA), and 342–362 (IFGM…LELI).

The protein belongs to the auxin efflux carrier (TC 2.A.69.1) family. In terms of tissue distribution, expressed in leaves, shoot apex and panicles. Expressed in roots, stem bases, stems, leaves and young panicles.

The protein localises to the membrane. In terms of biological role, may act as a component of the auxin efflux carrier. The chain is Probable auxin efflux carrier component 5a from Oryza sativa subsp. japonica (Rice).